We begin with the raw amino-acid sequence, 796 residues long: Peroxisome proliferator-activated receptor gamma coactivator 1-alpha (796 aa).

K77 carries the N6-acetyllysine modification. Residues 98–138 (PVDEDGLPSFDALTDGDVTTENEASPSSMPDGTPPPQEAEE) are disordered. Residues 114–127 (DVTTENEASPSSMP) are compositionally biased toward polar residues. Positions 142–146 (LKKLL) match the LXXLL motif motif. K144 bears the N6-acetyllysine mark. T176 carries the post-translational modification Phosphothreonine; by AMPK. K182 carries the post-translational modification N6-acetyllysine. The segment at 211–274 (YLTTNDDPPH…PNDPKGSPFE (64 aa)) is disordered. The segment covering 217–235 (DPPHTKPTETRNSSRDKCT) has biased composition (basic and acidic residues). Positions 242–258 (TQSQSQHLQAKPTSLSL) are enriched in polar residues. N6-acetyllysine occurs at positions 252, 269, 276, and 319. The disordered stretch occupies residues 288–349 (GTAGLTPPTT…NNSTKKGPEQ (62 aa)). The segment at 291–337 (GLTPPTTPPHKANQDNPFRASPKLKPPCKTVVPPPSKKTRYSESSGT) is interaction with PPARG. Polar residues predominate over residues 332-344 (SESSGTHGNNSTK). An N6-acetyllysine mark is found at K345, K411, and K449. A mediates interaction with RNF34 region spans residues 348-796 (EQSELYAQLS…LKEAQRSLRR (449 aa)). A disordered region spans residues 463–487 (HFGHPSQAVFDDEADKTSELRDSDF). The span at 477–486 (DKTSELRDSD) shows a compositional bias: basic and acidic residues. S537 bears the Phosphoserine; by AMPK mark. Disordered stretches follow at residues 541-637 (FNSP…SYEE) and 648-667 (YRRE…ERQR). Low complexity predominate over residues 568–603 (RSFSQHRSCSRSPYSRSRSRSPGSRSSSRSCYYSES). The span at 620-629 (SRSRSPYSRR) shows a compositional bias: basic residues. The RRM domain maps to 675 to 751 (RVIYVGKIRP…TDFELYFCGR (77 aa)). An N6-acetyllysine mark is found at K756 and K777.

In terms of assembly, homooligomer. Interacts with MYBBP1A; inhibits MYBBP1A transcriptional activation. Interacts with PRDM16, LPIN1 and PML. Interacts (via LXXLL motif) with RORA and RORC (via AF-2 motif); activates RORA and RORC transcriptional activation. Interacts with LRPPRC. Interacts with FOXO1. Interacts with NR5A2. Phosphorylation by AMPK in skeletal muscle increases activation of its own promoter. Phosphorylated by CLK2. Post-translationally, heavily acetylated by KAT2A/GCN5 under conditions of high nutrients, leading to inactivation of PPARGC1A. Deacetylated by SIRT1 in low nutrients/high NAD conditions, leading to its activation. In terms of processing, ubiquitinated. Ubiquitination by RNF34 induces proteasomal degradation.

It is found in the nucleus. Its subcellular location is the PML body. Transcriptional coactivator for steroid receptors and nuclear receptors. Greatly increases the transcriptional activity of PPARG and thyroid hormone receptor on the uncoupling protein promoter. Can regulate key mitochondrial genes that contribute to the program of adaptive thermogenesis. Plays an essential role in metabolic reprogramming in response to dietary availability through coordination of the expression of a wide array of genes involved in glucose and fatty acid metabolism. Acts as a key regulator of gluconeogenesis: stimulates hepatic gluconeogenesis by increasing the expression of gluconeogenic enzymes, and acting together with FOXO1 to promote the fasting gluconeogenic program. Induces the expression of PERM1 in the skeletal muscle in an ESRRA-dependent manner. Also involved in the integration of the circadian rhythms and energy metabolism. Required for oscillatory expression of clock genes, such as BMAL1 and NR1D1, through the coactivation of RORA and RORC, and metabolic genes, such as PDK4 and PEPCK. This chain is Peroxisome proliferator-activated receptor gamma coactivator 1-alpha (PPARGC1A), found in Sus scrofa (Pig).